Consider the following 559-residue polypeptide: Regulatory protein PHO2 (559 aa).

4 disordered regions span residues Ala16 to Ala88, Leu132 to Arg158, Ile293 to Asn333, and Pro534 to Ile559. 2 stretches are compositionally biased toward low complexity: residues His24–Gln52 and Asn63–Ser74. Residues Gln77–Gln136 constitute a DNA-binding region (homeobox). Over residues Lys141–Asp151 the composition is skewed to polar residues. Low complexity predominate over residues Ile293–Asn307. Positions Asn308–Ser323 are enriched in acidic residues. Basic and acidic residues predominate over residues Ser324–Asn333. Thr542 carries the post-translational modification Phosphothreonine.

It is found in the nucleus. Its function is as follows. Regulator in phosphate metabolism and acts as a derepressor of another central regulator PHO5. Binds to the upstream activator sequence (UAS) of PHO5. It also binds to the TRP4, HIS4, and CYC1 promoters. This Saccharomyces cerevisiae (strain ATCC 204508 / S288c) (Baker's yeast) protein is Regulatory protein PHO2 (PHO2).